The following is a 568-amino-acid chain: Urease subunit alpha (568 aa).

Residues 131-568 enclose the Urease domain; the sequence is GGMDAHIHFI…LPLAQRYFLY (438 aa). Positions 136, 138, and 219 each coordinate Ni(2+). Position 219 is an N6-carboxylysine (Lys-219). His-221 lines the substrate pocket. Ni(2+)-binding residues include His-248 and His-274. Catalysis depends on His-322, which acts as the Proton donor. Asp-362 contacts Ni(2+).

Belongs to the metallo-dependent hydrolases superfamily. Urease alpha subunit family. Heterotrimer of UreA (gamma), UreB (beta) and UreC (alpha) subunits. Three heterotrimers associate to form the active enzyme. Ni cation serves as cofactor. Post-translationally, carboxylation allows a single lysine to coordinate two nickel ions.

The protein localises to the cytoplasm. The catalysed reaction is urea + 2 H2O + H(+) = hydrogencarbonate + 2 NH4(+). It functions in the pathway nitrogen metabolism; urea degradation; CO(2) and NH(3) from urea (urease route): step 1/1. The polypeptide is Urease subunit alpha (Cereibacter sphaeroides (strain KD131 / KCTC 12085) (Rhodobacter sphaeroides)).